The primary structure comprises 61 residues: Large ribosomal subunit protein uL30 (61 aa).

The protein belongs to the universal ribosomal protein uL30 family. In terms of assembly, part of the 50S ribosomal subunit.

The protein is Large ribosomal subunit protein uL30 of Jannaschia sp. (strain CCS1).